A 224-amino-acid chain; its full sequence is 2-C-methyl-D-erythritol 4-phosphate cytidylyltransferase (224 aa).

It belongs to the IspD/TarI cytidylyltransferase family. IspD subfamily.

The enzyme catalyses 2-C-methyl-D-erythritol 4-phosphate + CTP + H(+) = 4-CDP-2-C-methyl-D-erythritol + diphosphate. Its pathway is isoprenoid biosynthesis; isopentenyl diphosphate biosynthesis via DXP pathway; isopentenyl diphosphate from 1-deoxy-D-xylulose 5-phosphate: step 2/6. Its function is as follows. Catalyzes the formation of 4-diphosphocytidyl-2-C-methyl-D-erythritol from CTP and 2-C-methyl-D-erythritol 4-phosphate (MEP). The chain is 2-C-methyl-D-erythritol 4-phosphate cytidylyltransferase from Caldicellulosiruptor bescii (strain ATCC BAA-1888 / DSM 6725 / KCTC 15123 / Z-1320) (Anaerocellum thermophilum).